The primary structure comprises 275 residues: DNA polymerase II subunit B4 (275 aa).

The DNA-binding element occupies 11–17; sequence LPLAIVR. Positions 112–122 are enriched in low complexity; sequence ASYPAGGAALK. The segment at 112 to 275 is disordered; it reads ASYPAGGAAL…EEVESDEEDE (164 aa). A Nuclear localization signal motif is present at residues 135-142; the sequence is KKRKQEEP. The segment covering 151–161 has biased composition (basic and acidic residues); that stretch reads SKIDEETKRND. Positions 152–179 form a coiled coil; the sequence is KIDEETKRNDEETENDNTEEENGNDEED. Acidic residues-rich tracts occupy residues 162–237 and 266–275; these read EETE…EESG and EEVESDEEDE.

It belongs to the NFYB/HAP3 subunit family. Heterotrimeric transcription factor composed of three components, NF-YA, NF-YB and NF-YC. NF-YB and NF-YC must interact and dimerize for NF-YA association and DNA binding. Binds directly with DPB3-1.

It is found in the nucleus. In terms of biological role, component of the NF-Y/HAP transcription factor complex. The NF-Y complex stimulates the transcription of various genes by recognizing and binding to a CCAAT motif in promoters. The sequence is that of DNA polymerase II subunit B4 from Arabidopsis thaliana (Mouse-ear cress).